A 215-amino-acid polypeptide reads, in one-letter code: Nascent polypeptide-associated complex subunit alpha (215 aa).

The segment at 1-81 is disordered; sequence MPGEATETVP…SEKKARKAMS (81 aa). Over residues 9–28 the composition is skewed to polar residues; that stretch reads VPATEQELPQPQAETGSGTE. Positions 29 to 42 are enriched in acidic residues; the sequence is SDSDESVPELEEQD. The residue at position 43 (Ser43) is a Phosphoserine; by ILK1. The segment covering 44–57 has biased composition (low complexity); the sequence is TQATTQQAQLAAAA. The segment at 69 to 80 is required for DNA-binding; it reads QSRSEKKARKAM. The NAC-A/B domain occupies 70-135; it reads SRSEKKARKA…AKIEDLSQQA (66 aa). Residues 93–108 form an RNA/DNA-binding region; sequence RVTIRKSKNILFVITK. Ser132 carries the phosphoserine modification. N6-acetyllysine; alternate is present on Lys142. Lys142 participates in a covalent cross-link: Glycyl lysine isopeptide (Lys-Gly) (interchain with G-Cter in SUMO2); alternate. Phosphothreonine; by GSK3-beta is present on Thr159. Thr161 carries the phosphothreonine modification. Residues Ser166, Ser186, Ser191, and Ser203 each carry the phosphoserine modification. A UBA domain is found at 176–213; sequence VEVKDIELVMSQANVSRAKAVRALKNNSNDIVNAIMEL.

It belongs to the NAC-alpha family. As to quaternary structure, part of the nascent polypeptide-associated complex (NAC), which is a heterodimer of NACA and BTF3 (via NAC-A/B domains). NAC associates with ribosomes through the BTF3/NACB subunit and contacts the ribosomal protein L23, which is positioned near the exiting site. Both subunits can contact nascent polypeptide chains. NACA may also form homodimers, and only this form binds DNA. Interacts with TBP and JUN. In terms of processing, phosphorylation of Ser-43 by ILK during cell adhesion may promote nuclear localization. Phosphorylation of Thr-159 by GSK3B may promote proteasome mediated degradation.

Its subcellular location is the cytoplasm. It localises to the nucleus. Its function is as follows. Prevents inappropriate targeting of non-secretory polypeptides to the endoplasmic reticulum (ER). Binds to nascent polypeptide chains as they emerge from the ribosome and blocks their interaction with the signal recognition particle (SRP), which normally targets nascent secretory peptides to the ER. Also reduces the inherent affinity of ribosomes for protein translocation sites in the ER membrane (M sites). May act as a specific coactivator for JUN, binding to DNA and stabilizing the interaction of JUN homodimers with target gene promoters. The chain is Nascent polypeptide-associated complex subunit alpha (NACA) from Pongo abelii (Sumatran orangutan).